The following is a 639-amino-acid chain: DNA gyrase subunit B (639 aa).

The segment covering 392–402 has biased composition (basic and acidic residues); that stretch reads QAEELTRRKSA. Residues 392-416 form a disordered region; the sequence is QAEELTRRKSALESTSLPGKLADCQ. A Toprim domain is found at 423 to 537; the sequence is SELFIVEGDS…AGYVYAAQPP (115 aa). Mg(2+) contacts are provided by E429, D502, and D504. A Glycyl lysine isopeptide (Lys-Gly) (interchain with G-Cter in SAMP2) cross-link involves residue K624.

The protein belongs to the type II topoisomerase GyrB family. In terms of assembly, heterotetramer, composed of two GyrA and two GyrB chains. In the heterotetramer, GyrA contains the active site tyrosine that forms a transient covalent intermediate with DNA, while GyrB binds cofactors and catalyzes ATP hydrolysis. Mg(2+) serves as cofactor. Requires Mn(2+) as cofactor. The cofactor is Ca(2+).

Its subcellular location is the cytoplasm. The catalysed reaction is ATP-dependent breakage, passage and rejoining of double-stranded DNA.. Its function is as follows. A type II topoisomerase that negatively supercoils closed circular double-stranded (ds) DNA in an ATP-dependent manner to modulate DNA topology and maintain chromosomes in an underwound state. Negative supercoiling favors strand separation, and DNA replication, transcription, recombination and repair, all of which involve strand separation. Also able to catalyze the interconversion of other topological isomers of dsDNA rings, including catenanes and knotted rings. Type II topoisomerases break and join 2 DNA strands simultaneously in an ATP-dependent manner. In Haloferax volcanii (strain ATCC 29605 / DSM 3757 / JCM 8879 / NBRC 14742 / NCIMB 2012 / VKM B-1768 / DS2) (Halobacterium volcanii), this protein is DNA gyrase subunit B.